Consider the following 531-residue polypeptide: CTP synthase (531 aa).

The amidoligase domain stretch occupies residues 1–265 (MAKYIFITGG…DRIITERLNL (265 aa)). Position 13 (Ser-13) interacts with CTP. Ser-13 is a UTP binding site. Position 14–19 (14–19 (SLGKGI)) interacts with ATP. Tyr-54 is a binding site for L-glutamine. ATP is bound at residue Asp-71. Residues Asp-71 and Glu-139 each coordinate Mg(2+). CTP is bound by residues 146–148 (DIE), 186–191 (KTKPTQ), and Lys-222. UTP contacts are provided by residues 186–191 (KTKPTQ) and Lys-222. The Glutamine amidotransferase type-1 domain occupies 290–529 (NVALVGKYVE…IRACLEYKRK (240 aa)). Position 349 (Gly-349) interacts with L-glutamine. Cys-376 serves as the catalytic Nucleophile; for glutamine hydrolysis. L-glutamine is bound by residues 377 to 380 (LGMQ), Glu-400, and Arg-457. Residues His-502 and Glu-504 contribute to the active site.

The protein belongs to the CTP synthase family. In terms of assembly, homotetramer.

It carries out the reaction UTP + L-glutamine + ATP + H2O = CTP + L-glutamate + ADP + phosphate + 2 H(+). The enzyme catalyses L-glutamine + H2O = L-glutamate + NH4(+). It catalyses the reaction UTP + NH4(+) + ATP = CTP + ADP + phosphate + 2 H(+). The protein operates within pyrimidine metabolism; CTP biosynthesis via de novo pathway; CTP from UDP: step 2/2. Its activity is regulated as follows. Allosterically activated by GTP, when glutamine is the substrate; GTP has no effect on the reaction when ammonia is the substrate. The allosteric effector GTP functions by stabilizing the protein conformation that binds the tetrahedral intermediate(s) formed during glutamine hydrolysis. Inhibited by the product CTP, via allosteric rather than competitive inhibition. In terms of biological role, catalyzes the ATP-dependent amination of UTP to CTP with either L-glutamine or ammonia as the source of nitrogen. Regulates intracellular CTP levels through interactions with the four ribonucleotide triphosphates. This chain is CTP synthase, found in Aquifex aeolicus (strain VF5).